A 458-amino-acid chain; its full sequence is Glutamyl-tRNA(Gln) amidotransferase subunit D (458 aa).

One can recognise an Asparaginase/glutaminase domain in the interval 97–434; it reads PNVSVMSTGG…KEVERLMRTN (338 aa). Catalysis depends on residues Thr107, Thr185, Asp186, and Lys264.

Belongs to the asparaginase 1 family. GatD subfamily. In terms of assembly, heterodimer of GatD and GatE.

It catalyses the reaction L-glutamyl-tRNA(Gln) + L-glutamine + ATP + H2O = L-glutaminyl-tRNA(Gln) + L-glutamate + ADP + phosphate + H(+). Its function is as follows. Allows the formation of correctly charged Gln-tRNA(Gln) through the transamidation of misacylated Glu-tRNA(Gln) in organisms which lack glutaminyl-tRNA synthetase. The reaction takes place in the presence of glutamine and ATP through an activated gamma-phospho-Glu-tRNA(Gln). The GatDE system is specific for glutamate and does not act on aspartate. The sequence is that of Glutamyl-tRNA(Gln) amidotransferase subunit D from Methanopyrus kandleri (strain AV19 / DSM 6324 / JCM 9639 / NBRC 100938).